A 211-amino-acid polypeptide reads, in one-letter code: Endonuclease Htp3 (211 aa).

An N-terminal signal peptide occupies residues 1-20 (MLEVPVWIPILAFAVGLGLG). A RxLR motif is present at residues 48–51 (RTLR). The region spanning 48–198 (RTLRGKVVSV…REKRVNIWSL (151 aa)) is the TNase-like domain. Aspartate 77 lines the Ca(2+) pocket. The active site involves arginine 90. Aspartate 95 is a binding site for Ca(2+). Residues glutamate 98 and arginine 138 contribute to the active site. N-linked (GlcNAc...) asparagine glycosylation occurs at asparagine 153. Positions 200–211 (KRETPAQYKARK) are binding to the host cell surface.

In the N-terminal section; belongs to the RxLR effector family. The protein in the C-terminal section; belongs to the LCL3 family. Interacts with the host cell surface endoplasmin gp96, in order to get translocated into to host cell. Interacts with the effector Htp1, in order to get released from vesicles into the host cytosol.

It is found in the secreted. The protein localises to the host cytoplasm. The protein resides in the host cytosol. Its activity is regulated as follows. The nuclease activity shows a general salt dependency with a clear reduction by magnesium and sulfate ions. In terms of biological role, effector involved in the disease saprolegniosis in salmonids and other freshwater fish, resulting in considerable economic losses in aquaculture. Within the host fish cells, Htp3 is released from vesicles into host cytosol where it degrades nucleic acids. The sequence is that of Endonuclease Htp3 (HTP3) from Saprolegnia parasitica (strain CBS 223.65).